Here is a 430-residue protein sequence, read N- to C-terminus: Tol-Pal system protein TolB (430 aa).

A signal peptide spans 1-21; sequence MKQALRVAFGFLMLWAAVLHA.

It belongs to the TolB family. As to quaternary structure, the Tol-Pal system is composed of five core proteins: the inner membrane proteins TolA, TolQ and TolR, the periplasmic protein TolB and the outer membrane protein Pal. They form a network linking the inner and outer membranes and the peptidoglycan layer.

The protein resides in the periplasm. In terms of biological role, part of the Tol-Pal system, which plays a role in outer membrane invagination during cell division and is important for maintaining outer membrane integrity. TolB occupies a key intermediary position in the Tol-Pal system because it communicates directly with both membrane-embedded components, Pal in the outer membrane and TolA in the inner membrane. The sequence is that of Tol-Pal system protein TolB from Salmonella enteritidis PT4 (strain P125109).